The sequence spans 552 residues: Non-structural protein NS1 (552 aa).

The protein belongs to the orbivirus non-structural protein NS1 family.

This is Non-structural protein NS1 (Segment-5) from Antilocapra americana (Pronghorn).